We begin with the raw amino-acid sequence, 924 residues long: Isoleucine--tRNA ligase (924 aa).

The 'HIGH' region motif lies at P57 to H67. E552 contributes to the L-isoleucyl-5'-AMP binding site. Positions K593 to S597 match the 'KMSKS' region motif. ATP is bound at residue K596. C891, C894, C911, and C914 together coordinate Zn(2+).

It belongs to the class-I aminoacyl-tRNA synthetase family. IleS type 1 subfamily. Monomer. The cofactor is Zn(2+).

It localises to the cytoplasm. It catalyses the reaction tRNA(Ile) + L-isoleucine + ATP = L-isoleucyl-tRNA(Ile) + AMP + diphosphate. Functionally, catalyzes the attachment of isoleucine to tRNA(Ile). As IleRS can inadvertently accommodate and process structurally similar amino acids such as valine, to avoid such errors it has two additional distinct tRNA(Ile)-dependent editing activities. One activity is designated as 'pretransfer' editing and involves the hydrolysis of activated Val-AMP. The other activity is designated 'posttransfer' editing and involves deacylation of mischarged Val-tRNA(Ile). In Geobacillus thermodenitrificans (strain NG80-2), this protein is Isoleucine--tRNA ligase.